Here is a 26-residue protein sequence, read N- to C-terminus: PRKCH upstream open reading frame 2 (26 aa).

In terms of assembly, interacts with protein kinase C eta as well as other protein kinases including PRKCD, PRKCQ and PRKCE but not with PRKCG or PRKCZ; the interactions lead to inhibition of kinase activity.

Product of an upstream open reading frame (ORF) of PRKCH which regulates translation of the downstream protein kinase C eta (PKC-eta) ORF. Functions as a repressive element that maintains low basal levels of PKC-eta in growing cells but enhances its expression during stress conditions induced by amino acid starvation in a EIF2AK4/GCN2-dependent manner. In addition to its role in regulating PKC-eta translation, also inhibits the kinase activity of PKC-eta as well as other protein kinases including PRKCD, PRKCQ and PRKCE but not PRKCA, PRKCG or PRKCZ. The protein is PRKCH upstream open reading frame 2 of Homo sapiens (Human).